Here is a 790-residue protein sequence, read N- to C-terminus: Transient receptor potential cation channel subfamily V member 3 (790 aa).

Over 1-430 (MKAHPKEMVP…TLEPLHTLLH (430 aa)) the chain is Cytoplasmic. 3 disordered regions span residues 15–34 (RVAA…PAEI), 52–71 (PNPT…MDSN), and 76–112 (ISGN…KEEQ). A compositionally biased stretch (polar residues) spans 95–105 (ETPSNPNSPSA). 7 ANK repeats span residues 117–148 (RRLK…LCRR), 170–198 (TCLM…EEND), 214–243 (EGQT…DVNA), 261–291 (FGET…DITS), 298–330 (NILH…RSGN), 340–362 (DGLT…YILS), and 398–420 (TTDN…HEML). Residues 431-460 (MKWKKFAKHMFFLSFCFYFFYNITLTLVSY) form a helical membrane-spanning segment. Residues 461–479 (YRPREEEAIPHPLALTHKM) lie on the Extracellular side of the membrane. A helical transmembrane segment spans residues 480–508 (GWLQLLGRMFVLIWAMCISVKEGIAIFLL). At 509 to 519 (RPSDLQSILSD) the chain is on the cytoplasmic side. Residues 520-540 (AWFHFVFFIQAVLVILSVFLY) traverse the membrane as a helical segment. The Extracellular segment spans residues 541 to 545 (LFAYK). Residues 546 to 566 (EYLACLVLAMALGWANMLYYT) form a helical membrane-spanning segment. The Cytoplasmic portion of the chain corresponds to 567 to 569 (RGF). Residues 570 to 608 (QSMGMYSVMIQKVILHDVLKFLFVYIVFLLGFGVALASL) traverse the membrane as a helical segment. The Extracellular segment spans residues 609–620 (IEKCPKDNKDCS). The pore-forming intramembrane region spans 621–646 (SYGSFSDAVLELFKLTIGLGDLNIQQ). Residue G638 coordinates Na(+). Over 647–649 (NSK) the chain is Extracellular. A helical transmembrane segment spans residues 650 to 686 (YPILFLFLLITYVILTFVLLLNMLIALMGETVENVSK). At 687-790 (ESERIWRLQR…EVEEFPETSV (104 aa)) the chain is on the cytoplasmic side.

The protein belongs to the transient receptor (TC 1.A.4) family. TrpV subfamily. TRPV3 sub-subfamily. In terms of assembly, homotetramer. May convert from a homotetramer to a homopentamer to allow pore dilation. Interacts with TRPV1; may form a heteromeric channel with TRPV1. Interacts with SNX11; this interaction promotes TRPV3 trafficking from the cell membrane to lysosome for degradation. Abundantly expressed in CNS. Widely expressed at low levels. Detected in dorsal root ganglion (at protein level). Expressed in the keratinocyte layers of the outer root sheath and, to lesser extent, to the matrix of the hair follicles (at protein level).

It is found in the cell membrane. The protein localises to the cytoplasm. It localises to the lysosome. The enzyme catalyses Ca(2+)(in) = Ca(2+)(out). It catalyses the reaction Mg(2+)(in) = Mg(2+)(out). The catalysed reaction is Na(+)(in) = Na(+)(out). It carries out the reaction K(+)(in) = K(+)(out). Activated by cannabinoid that binds to the vanilloid binding pocket. Diphenylboronic anhydride induces pore dilation and enhances cation permeability by promoting the conversion to a homopentamer. Non-selective calcium permeant cation channel. It is activated by innocuous (warm) temperatures and shows an increased response at noxious temperatures greater than 39 degrees Celsius. Activation exhibits an outward rectification. The channel pore can dilate to provide permeability to larger cations. May associate with TRPV1 and may modulate its activity. Is a negative regulator of hair growth and cycling: TRPV3-coupled signaling suppresses keratinocyte proliferation in hair follicles and induces apoptosis and premature hair follicle regression (catagen). The polypeptide is Transient receptor potential cation channel subfamily V member 3 (TRPV3) (Homo sapiens (Human)).